A 169-amino-acid chain; its full sequence is Peptide deformylase (169 aa).

2 residues coordinate Fe cation: C94 and H136. The active site involves E137. H140 contacts Fe cation.

The protein belongs to the polypeptide deformylase family. Requires Fe(2+) as cofactor.

The enzyme catalyses N-terminal N-formyl-L-methionyl-[peptide] + H2O = N-terminal L-methionyl-[peptide] + formate. Its function is as follows. Removes the formyl group from the N-terminal Met of newly synthesized proteins. Requires at least a dipeptide for an efficient rate of reaction. N-terminal L-methionine is a prerequisite for activity but the enzyme has broad specificity at other positions. This Desulfotalea psychrophila (strain LSv54 / DSM 12343) protein is Peptide deformylase.